Here is a 138-residue protein sequence, read N- to C-terminus: Cysteine desulfuration protein SufE (138 aa).

Catalysis depends on Cys51, which acts as the Cysteine persulfide intermediate.

The protein belongs to the SufE family. Homodimer. Interacts with SufS.

The protein localises to the cytoplasm. Its pathway is cofactor biosynthesis; iron-sulfur cluster biosynthesis. Functionally, participates in cysteine desulfuration mediated by SufS. Cysteine desulfuration mobilizes sulfur from L-cysteine to yield L-alanine and constitutes an essential step in sulfur metabolism for biosynthesis of a variety of sulfur-containing biomolecules. Functions as a sulfur acceptor for SufS, by mediating the direct transfer of the sulfur atom from the S-sulfanylcysteine of SufS, an intermediate product of cysteine desulfuration process. This Pectobacterium carotovorum subsp. carotovorum (strain PC1) protein is Cysteine desulfuration protein SufE.